A 255-amino-acid chain; its full sequence is Gene 54 protein (255 aa).

This chain is Gene 54 protein (54), found in Mycobacterium (Mycobacteriophage L5).